A 373-amino-acid polypeptide reads, in one-letter code: 3 beta-hydroxysteroid dehydrogenase/Delta 5--&gt;4-isomerase (373 aa).

The Proton acceptor role is filled by Tyr155. NAD(+) is bound at residue Lys159. The helical transmembrane segment at 288–308 (IFLKYWLAFLLEIVSFLLSPI) threads the bilayer.

The protein belongs to the 3-beta-HSD family.

The protein localises to the endoplasmic reticulum membrane. It localises to the mitochondrion membrane. It carries out the reaction a 3beta-hydroxy-Delta(5)-steroid + NAD(+) = a 3-oxo-Delta(5)-steroid + NADH + H(+). It catalyses the reaction a 3-oxo-Delta(5)-steroid = a 3-oxo-Delta(4)-steroid. The protein operates within lipid metabolism; steroid biosynthesis. Its function is as follows. 3-beta-HSD is a bifunctional enzyme, that catalyzes the oxidative conversion of Delta(5)-ene-3-beta-hydroxy steroid, and the oxidative conversion of ketosteroids. The 3-beta-HSD enzymatic system plays a crucial role in the biosynthesis of all classes of hormonal steroids. The sequence is that of 3 beta-hydroxysteroid dehydrogenase/Delta 5--&gt;4-isomerase (HSD3B) from Equus caballus (Horse).